The chain runs to 801 residues: Palmitoyl thioesterase CPT1C (801 aa).

The Cytoplasmic portion of the chain corresponds to 1–49; sequence MAEAHQASSLLSSLSSDGAEVELSSSVWQEIYLSALRSWKRNLWRVWND. Residues 50–70 form a helical membrane-spanning segment; that stretch reads FLAGVVPATPLSWLFLFSTIQ. Residues 71–103 lie on the Mitochondrial intermembrane side of the membrane; it reads LACLLQLDPSLGLMEKIKELLPDWGGQHHQLQG. The chain crosses the membrane as a helical span at residues 104–124; sequence LLAAAVFASCLWGTLIFTLHV. The Cytoplasmic portion of the chain corresponds to 125-801; the sequence is ALRLLLSHHG…PNIPKSSTNL (677 aa). The active-site Proton acceptor is H469. 551-563 lines the CoA pocket; that stretch reads GKSFIKGCHVSSD. Residues Y585, S587, and T598 each coordinate (R)-carnitine. The tract at residues 760–801 is required for interaction with GRIA1; it reads LFQAGQQFKRQFTGLGESSGWKYSNLSCKTVDPNIPKSSTNL.

It belongs to the carnitine/choline acetyltransferase family. Peripherally associated with AMPAR complex. AMPAR complex consists of an inner core made of 4 pore-forming GluA/GRIA proteins (GRIA1, GRIA2, GRIA3 and GRIA4) and 4 major auxiliary subunits arranged in a twofold symmetry. One of the two pairs of distinct binding sites is occupied either by CNIH2, CNIH3 or CACNG2, CACNG3. The other harbors CACNG2, CACNG3, CACNG4, CACNG8 or GSG1L. This inner core of AMPAR complex is complemented by outer core constituents binding directly to the GluA/GRIA proteins at sites distinct from the interaction sites of the inner core constituents. Outer core constituents include at least PRRT1, PRRT2, CKAMP44/SHISA9, FRRS1L and NRN1. The proteins of the inner and outer core serve as a platform for other, more peripherally associated AMPAR constituents, including CPT1C. Alone or in combination, these auxiliary subunits control the gating and pharmacology of the AMPAR complex and profoundly impact their biogenesis and protein processing. Interacts with SACM1L; the interaction regulates SACM1L phosphatidylinositol-3-phosphatase activity and translocation to endoplasmic reticulum/trans Golgi network in a malonyl-CoA dependent manner. Interacts with ATL1. Expressed in brain (at protein level).

The protein localises to the synapse. It is found in the cell projection. The protein resides in the dendrite. It localises to the axon. Its subcellular location is the endoplasmic reticulum membrane. It catalyses the reaction S-hexadecanoyl-L-cysteinyl-[protein] + H2O = L-cysteinyl-[protein] + hexadecanoate + H(+). Its function is as follows. Palmitoyl thioesterase specifically expressed in the endoplasmic reticulum of neurons. Modulates the trafficking of the glutamate receptor, AMPAR, to plasma membrane through depalmitoylation of GRIA1. Also regulates AMPR trafficking through the regulation of SACM1L phosphatidylinositol-3-phosphatase activity by interaction in a malonyl-CoA dependent manner. Binds malonyl-CoA and couples malonyl-CoA to ceramide levels, necessary for proper spine maturation and contributing to systemic energy homeostasis and appetite control. Binds to palmitoyl-CoA, but does not have carnitine palmitoyltransferase 1 catalytic activity or at very low levels. This is Palmitoyl thioesterase CPT1C (Cpt1c) from Rattus norvegicus (Rat).